A 190-amino-acid polypeptide reads, in one-letter code: Elongation factor P-like protein (190 aa).

Belongs to the elongation factor P family.

The sequence is that of Elongation factor P-like protein from Edwardsiella ictaluri (strain 93-146).